The sequence spans 154 residues: Myoglobin (154 aa).

A Globin domain is found at 2 to 148; that stretch reads GLSEAEWQLV…FRKDIAAKYK (147 aa). Phosphoserine is present on Ser4. His65 contributes to the nitrite binding site. His65 provides a ligand contact to O2. The residue at position 68 (Thr68) is a Phosphothreonine. His94 contributes to the heme b binding site.

It belongs to the globin family. In terms of assembly, monomeric.

The protein resides in the cytoplasm. It localises to the sarcoplasm. It carries out the reaction Fe(III)-heme b-[protein] + nitric oxide + H2O = Fe(II)-heme b-[protein] + nitrite + 2 H(+). It catalyses the reaction H2O2 + AH2 = A + 2 H2O. Its function is as follows. Monomeric heme protein which primary function is to store oxygen and facilitate its diffusion within muscle tissues. Reversibly binds oxygen through a pentacoordinated heme iron and enables its timely and efficient release as needed during periods of heightened demand. Depending on the oxidative conditions of tissues and cells, and in addition to its ability to bind oxygen, it also has a nitrite reductase activity whereby it regulates the production of bioactive nitric oxide. Under stress conditions, like hypoxia and anoxia, it also protects cells against reactive oxygen species thanks to its pseudoperoxidase activity. The protein is Myoglobin (MB) of Indopacetus pacificus (Longman's beaked whale).